Here is a 584-residue protein sequence, read N- to C-terminus: Aspartate--tRNA ligase (584 aa).

Residue Glu169 participates in L-aspartate binding. Residues 193–196 are aspartate; the sequence is QLFK. Arg215 is a binding site for L-aspartate. Residues 215–217 and Gln224 each bind ATP; that span reads RDE. His446 contacts L-aspartate. Glu480 is a binding site for ATP. Arg487 serves as a coordination point for L-aspartate. 532-535 provides a ligand contact to ATP; it reads GLDR.

The protein belongs to the class-II aminoacyl-tRNA synthetase family. Type 1 subfamily. As to quaternary structure, homodimer.

It localises to the cytoplasm. It carries out the reaction tRNA(Asp) + L-aspartate + ATP = L-aspartyl-tRNA(Asp) + AMP + diphosphate. Its function is as follows. Catalyzes the attachment of L-aspartate to tRNA(Asp) in a two-step reaction: L-aspartate is first activated by ATP to form Asp-AMP and then transferred to the acceptor end of tRNA(Asp). The sequence is that of Aspartate--tRNA ligase from Buchnera aphidicola subsp. Schizaphis graminum (strain Sg).